The chain runs to 102 residues: Small ribosomal subunit protein uS10 (102 aa).

It belongs to the universal ribosomal protein uS10 family. Part of the 30S ribosomal subunit.

In terms of biological role, involved in the binding of tRNA to the ribosomes. This is Small ribosomal subunit protein uS10 from Staphylococcus aureus (strain Mu3 / ATCC 700698).